Here is a 332-residue protein sequence, read N- to C-terminus: 5-dehydro-2-deoxygluconokinase 1 (332 aa).

It belongs to the carbohydrate kinase PfkB family.

It carries out the reaction 5-dehydro-2-deoxy-D-gluconate + ATP = 6-phospho-5-dehydro-2-deoxy-D-gluconate + ADP + H(+). The protein operates within polyol metabolism; myo-inositol degradation into acetyl-CoA; acetyl-CoA from myo-inositol: step 5/7. Catalyzes the phosphorylation of 5-dehydro-2-deoxy-D-gluconate (2-deoxy-5-keto-D-gluconate or DKG) to 6-phospho-5-dehydro-2-deoxy-D-gluconate (DKGP). The polypeptide is 5-dehydro-2-deoxygluconokinase 1 (Bacillus cereus (strain ZK / E33L)).